Consider the following 346-residue polypeptide: Protein tas (346 aa).

Tyrosine 53 acts as the Proton donor in catalysis. 234-244 (SCLGFGTLTGK) is an NADP(+) binding site.

The protein belongs to the aldo/keto reductase family. Aldo/keto reductase 2 subfamily.

The protein is Protein tas (tas) of Escherichia coli (strain K12).